The following is a 495-amino-acid chain: UDP-N-acetylmuramoyl-L-alanyl-D-glutamate--2,6-diaminopimelate ligase (495 aa).

Residues L27, S29, and 44–46 (HQA) each bind UDP-N-acetyl-alpha-D-muramoyl-L-alanyl-D-glutamate. 116 to 122 (GTNGKTT) is an ATP binding site. UDP-N-acetyl-alpha-D-muramoyl-L-alanyl-D-glutamate is bound by residues N157, 158–159 (TT), S185, Q191, and R193. An N6-carboxylysine modification is found at K225. Meso-2,6-diaminopimelate-binding positions include R390, 414-417 (DNPR), G465, and E469. The short motif at 414 to 417 (DNPR) is the Meso-diaminopimelate recognition motif element.

It belongs to the MurCDEF family. MurE subfamily. It depends on Mg(2+) as a cofactor. Carboxylation is probably crucial for Mg(2+) binding and, consequently, for the gamma-phosphate positioning of ATP.

It is found in the cytoplasm. It carries out the reaction UDP-N-acetyl-alpha-D-muramoyl-L-alanyl-D-glutamate + meso-2,6-diaminopimelate + ATP = UDP-N-acetyl-alpha-D-muramoyl-L-alanyl-gamma-D-glutamyl-meso-2,6-diaminopimelate + ADP + phosphate + H(+). The protein operates within cell wall biogenesis; peptidoglycan biosynthesis. Functionally, catalyzes the addition of meso-diaminopimelic acid to the nucleotide precursor UDP-N-acetylmuramoyl-L-alanyl-D-glutamate (UMAG) in the biosynthesis of bacterial cell-wall peptidoglycan. This chain is UDP-N-acetylmuramoyl-L-alanyl-D-glutamate--2,6-diaminopimelate ligase, found in Enterobacter sp. (strain 638).